Reading from the N-terminus, the 133-residue chain is Small ribosomal subunit protein uS8 (133 aa).

This sequence belongs to the universal ribosomal protein uS8 family. Part of the 30S ribosomal subunit. Contacts proteins S5 and S12.

Its function is as follows. One of the primary rRNA binding proteins, it binds directly to 16S rRNA central domain where it helps coordinate assembly of the platform of the 30S subunit. The polypeptide is Small ribosomal subunit protein uS8 (Anaplasma phagocytophilum (strain HZ)).